Consider the following 349-residue polypeptide: Transcription elongation factor A protein 3 (349 aa).

One can recognise a TFIIS N-terminal domain in the interval 5 to 82 (EELLRIAKKL…RNWKQLLDSP (78 aa)). The disordered stretch occupies residues 80-170 (DSPATPKGEK…RTPSSPSSPT (91 aa)). Positions 101-110 (KGLDCSDWKP) are enriched in basic and acidic residues. S115 bears the Phosphoserine mark. Over residues 121–133 (RVEEPKDRRDSVD) the composition is skewed to basic and acidic residues. Low complexity-rich tracts occupy residues 134 to 144 (SKSSATSSPKR) and 160 to 170 (PRTPSSPSSPT). S141 carries the phosphoserine modification. A TFIIS central domain is found at 188-304 (VRDKCVEMLS…EHQMAKTGGT (117 aa)). The TFIIS-type zinc finger occupies 307–347 (DLFQCSKCKKKNCTYNQVQTRSADEPMTTFVLCNECGNRWK). Residues C311, C314, C339, and C342 each coordinate Zn(2+).

It belongs to the TFS-II family.

It is found in the nucleus. Functionally, necessary for efficient RNA polymerase II transcription elongation past template-encoded arresting sites. The arresting sites in DNA have the property of trapping a certain fraction of elongating RNA polymerases that pass through, resulting in locked ternary complexes. Cleavage of the nascent transcript by S-II allows the resumption of elongation from the new 3'-terminus. This chain is Transcription elongation factor A protein 3 (TCEA3), found in Bos taurus (Bovine).